We begin with the raw amino-acid sequence, 183 residues long: NADH-ubiquinone oxidoreductase 20.8 kDa subunit (183 aa).

CHCH domains lie at 44–87 (GARC…IADI) and 88–130 (NKSC…LGLK). 4 short sequence motifs (cx9C motif) span residues 47 to 57 (CRDYNDDFMQC), 69 to 79 (CLKEGRRVTRC), 91 to 101 (CLEEFRKHWTC), and 112 to 122 (CRPAEWKLNKC). 4 disulfide bridges follow: Cys47–Cys79, Cys57–Cys69, Cys91–Cys122, and Cys101–Cys112. Residues 161–183 (EPFVPPTQTGDNNKAPAAASSSS) form a disordered region.

The protein belongs to the complex I NDUFA8 subunit family. As to quaternary structure, complex I is composed of about 40 different subunits. This is a component of the hydrophobic fraction. It depends on iron-sulfur cluster as a cofactor.

Its subcellular location is the mitochondrion inner membrane. Accessory subunit of the mitochondrial membrane respiratory chain NADH dehydrogenase (Complex I), that is believed not to be involved in catalysis. Complex I functions in the transfer of electrons from NADH to the respiratory chain. The immediate electron acceptor for the enzyme is believed to be ubiquinone. This Neurospora crassa (strain ATCC 24698 / 74-OR23-1A / CBS 708.71 / DSM 1257 / FGSC 987) protein is NADH-ubiquinone oxidoreductase 20.8 kDa subunit.